A 148-amino-acid polypeptide reads, in one-letter code: 3-dehydroquinate dehydratase (148 aa).

Tyr23 acts as the Proton acceptor in catalysis. Positions 74, 80, and 87 each coordinate substrate. Catalysis depends on His100, which acts as the Proton donor. Residues 101–102 (IS) and Arg111 contribute to the substrate site.

This sequence belongs to the type-II 3-dehydroquinase family. In terms of assembly, homododecamer.

The enzyme catalyses 3-dehydroquinate = 3-dehydroshikimate + H2O. It participates in metabolic intermediate biosynthesis; chorismate biosynthesis; chorismate from D-erythrose 4-phosphate and phosphoenolpyruvate: step 3/7. Its function is as follows. Catalyzes a trans-dehydration via an enolate intermediate. This chain is 3-dehydroquinate dehydratase, found in Halothermothrix orenii (strain H 168 / OCM 544 / DSM 9562).